Here is an 89-residue protein sequence, read N- to C-terminus: Putative regulatory protein CPE1749 (89 aa).

Belongs to the RemA family.

In Clostridium perfringens (strain 13 / Type A), this protein is Putative regulatory protein CPE1749.